A 216-amino-acid chain; its full sequence is MRAAAVKFRTCRSTTRVPRIMTARMSDDPLALFDSWFAEARASEPNDSNAMALATATPDGRPSLRMVLLKGHGPDGFVFYTNLDSRKGGELAANPHVALLFHWKSLRRQIRIEGSVAPVDNATADAYFATRSRDSQIGAWASDQSRPLDSRATFEARFAEMQARFAGQDVPRPPRWSGWRVTPERIEFWQDRAHRLHERTLFERTAIGWTKGYLYP.

Residues 65–70, 80–81, Arg86, Lys87, and Gln109 each bind FMN; these read RMVLLK and YT. Lys70 is a substrate binding site. The substrate site is built by Tyr127, Arg131, and Ser135. Residues 144 to 145 and Trp189 each bind FMN; that span reads QS. Substrate is bound at residue 195–197; the sequence is RLH. FMN is bound at residue Arg199.

Belongs to the pyridoxamine 5'-phosphate oxidase family. In terms of assembly, homodimer. Requires FMN as cofactor.

It catalyses the reaction pyridoxamine 5'-phosphate + O2 + H2O = pyridoxal 5'-phosphate + H2O2 + NH4(+). The catalysed reaction is pyridoxine 5'-phosphate + O2 = pyridoxal 5'-phosphate + H2O2. It functions in the pathway cofactor metabolism; pyridoxal 5'-phosphate salvage; pyridoxal 5'-phosphate from pyridoxamine 5'-phosphate: step 1/1. Its pathway is cofactor metabolism; pyridoxal 5'-phosphate salvage; pyridoxal 5'-phosphate from pyridoxine 5'-phosphate: step 1/1. In terms of biological role, catalyzes the oxidation of either pyridoxine 5'-phosphate (PNP) or pyridoxamine 5'-phosphate (PMP) into pyridoxal 5'-phosphate (PLP). The chain is Pyridoxine/pyridoxamine 5'-phosphate oxidase from Sphingopyxis alaskensis (strain DSM 13593 / LMG 18877 / RB2256) (Sphingomonas alaskensis).